Consider the following 511-residue polypeptide: Frizzled/smoothened-like sans CRD protein C (511 aa).

The signal sequence occupies residues 1–25 (MNQINKFIKNLYLIIITIILIIVIS). Topologically, residues 26-93 (NDNNGLFING…QWESYFEMSL (68 aa)) are extracellular. A glycan (N-linked (GlcNAc...) asparagine) is linked at N51. Residues 94–114 (IMGSISMFASLFLIITYSPLI) form a helical membrane-spanning segment. Residues 115 to 122 (NKKHTRHT) are Cytoplasmic-facing. The helical transmembrane segment at 123-143 (VGILCMSIGIFFVMVSDGRQL) threads the bilayer. Topologically, residues 144 to 172 (WDIESPGEYKKYCPDTGRYARQSDTKCLT) are extracellular. Residues 173-193 (TGLFFQFGCVTAIGWWSILAV) traverse the membrane as a helical segment. Residues 194–209 (DLWMTIAKKVQTTKKQ) are Cytoplasmic-facing. Residues 210 to 230 (LLYYLIGINTVSLILTFGPVV) traverse the membrane as a helical segment. Residues 231–253 (KNQYGFGNAAIGCWMLDLKYQYG) are Extracellular-facing. Residues 254–274 (FFWIPVGICLSVGSVFIGLIF) traverse the membrane as a helical segment. Topologically, residues 275–295 (WEIYKISDAVKKRYLKKHIKP) are cytoplasmic. A helical membrane pass occupies residues 296 to 316 (LCLIVLMCLEFLYMFIYYSYI). Over 317-357 (TANQPTYNKHVAEYIMCLIINAANVPGSYTCQLKTVSPTAQ) the chain is Extracellular. The chain crosses the membrane as a helical span at residues 358–378 (FLFLIAIRLMGLQGLIFYGLT). Over 379-511 (AATKKVWANS…RVNSPDNLQP (133 aa)) the chain is Cytoplasmic. Residues 430–511 (NGYTTGGSDN…RVNSPDNLQP (82 aa)) form a disordered region. Over residues 433–443 (TTGGSDNGVGS) the composition is skewed to gly residues. The segment covering 451–460 (KSSSNGGAQD) has biased composition (polar residues). Low complexity predominate over residues 461-485 (NNNNNNNNNNNNNNNNNNNNNNNNN). Polar residues predominate over residues 486 to 511 (SSSLEISGVESNNSTPRVNSPDNLQP).

It belongs to the G-protein coupled receptor Fz/Smo family.

The protein resides in the membrane. The polypeptide is Frizzled/smoothened-like sans CRD protein C (fscC) (Dictyostelium discoideum (Social amoeba)).